We begin with the raw amino-acid sequence, 565 residues long: Periplasmic trehalase (565 aa).

The signal sequence occupies residues 1-30; that stretch reads MKSPAPSRPQKMALIPACIFLYFAALSVQA. Substrate-binding positions include R152, 159 to 160, N196, 205 to 207, 277 to 279, and G310; these read WD, RSQ, and RPE. Catalysis depends on proton donor/acceptor residues D312 and E496. E511 is a binding site for substrate. Positions 540–565 are disordered; it reads DNVPATHPTVKSATTQPSTKEAQPTP. Polar residues predominate over residues 548-565; the sequence is TVKSATTQPSTKEAQPTP.

It belongs to the glycosyl hydrolase 37 family. As to quaternary structure, monomer.

Its subcellular location is the periplasm. It catalyses the reaction alpha,alpha-trehalose + H2O = alpha-D-glucose + beta-D-glucose. Its function is as follows. Provides the cells with the ability to utilize trehalose at high osmolarity by splitting it into glucose molecules that can subsequently be taken up by the phosphotransferase-mediated uptake system. This Shigella flexneri serotype 5b (strain 8401) protein is Periplasmic trehalase.